Here is a 184-residue protein sequence, read N- to C-terminus: Coordinator of PRMT5 and differentiation stimulator (184 aa).

At Met1 the chain carries N-acetylmethionine. A compositionally biased stretch (low complexity) spans 1 to 14; that stretch reads MDLQAAGAQAQGAA. The segment at 1–136 is disordered; the sequence is MDLQAAGAQA…PYDADDIQES (136 aa). Residues 42 to 56 are compositionally biased toward basic and acidic residues; the sequence is SSQERETEKAMDRLA. Phosphoserine is present on residues Ser66 and Ser75. Positions 78 to 89 are enriched in acidic residues; sequence EGFAMDEEDSDG.

Interacts with PRMT5. Interacts with histone H4; specifically interacts with the N-terminus of histone H4 but not with histone H3. Interacts with CBFB. Found in a complex with PRMT5, RUNX1 and CBFB.

It is found in the nucleus. Functionally, histone-binding protein required for histone H4 methyltransferase activity of PRMT5. Specifically required for histone H4 'Arg-3' methylation mediated by PRMT5, but not histone H3 'Arg-8' methylation, suggesting that it modulates the substrate specificity of PRMT5. Specifically interacts with the N-terminus of histone H4 but not with histone H3, suggesting that it acts by promoting the association between histone H4 and PRMT5. Involved in CCNE1 promoter repression. Plays a role in muscle cell differentiation by modulating the recruitment of PRMT5 to the promoter of genes involved in the coordination between cell cycle exit and muscle differentiation. The protein is Coordinator of PRMT5 and differentiation stimulator (COPRS) of Homo sapiens (Human).